We begin with the raw amino-acid sequence, 174 residues long: Adenine phosphoribosyltransferase (174 aa).

It belongs to the purine/pyrimidine phosphoribosyltransferase family. Homodimer.

It localises to the cytoplasm. The catalysed reaction is AMP + diphosphate = 5-phospho-alpha-D-ribose 1-diphosphate + adenine. Its pathway is purine metabolism; AMP biosynthesis via salvage pathway; AMP from adenine: step 1/1. In terms of biological role, catalyzes a salvage reaction resulting in the formation of AMP, that is energically less costly than de novo synthesis. The chain is Adenine phosphoribosyltransferase from Mycobacterium sp. (strain JLS).